Consider the following 2897-residue polypeptide: Chromodomain-helicase-DNA-binding protein 9 (2897 aa).

Over residues 173 to 201 the composition is skewed to polar residues; the sequence is QCTSLRSQQNRNNLNPGQNSLSQSKNFMN. Disordered stretches follow at residues 173-265, 482-525, and 537-671; these read QCTS…CSVS, QRQP…KQEK, and AKER…SAPL. A Glycyl lysine isopeptide (Lys-Gly) (interchain with G-Cter in SUMO2) cross-link involves residue K197. Residues 220–235 show a composition bias toward low complexity; it reads SNSQQSISMQQFSQTS. Polar residues-rich tracts occupy residues 247-260 and 484-506; these read HQEG…PNMT and QPPS…TQVR. At K499 the chain carries N6-acetyllysine. Residues 508–525 are compositionally biased toward basic and acidic residues; it reads MSEKKQRKKVESESKQEK. A Phosphoserine modification is found at S550. Basic and acidic residues predominate over residues 573-593; it reads KPKDKDSKKTKTCSKLKEKTK. K596 participates in a covalent cross-link: Glycyl lysine isopeptide (Lys-Gly) (interchain with G-Cter in SUMO2). S611 is subject to Phosphoserine. Residues 634 to 644 show a composition bias toward basic residues; that stretch reads RRSNRQIKRKK. Residues 645 to 660 are compositionally biased toward basic and acidic residues; the sequence is YAEDIEGKQSEEEVKG. Chromo domains follow at residues 690–761 and 773–839; these read AIVD…HFFA and VEVD…RLDR. An LXXLL motif 1 motif is present at residues 868 to 872; the sequence is LNWLL. The Helicase ATP-binding domain occupies 872-1046; the sequence is LFNWYNRRNC…FSLLHFLEPL (175 aa). 885–892 lines the ATP pocket; that stretch reads DEMGLGKT. The DEAH box motif lies at 997-1000; sequence DEAH. The short motif at 1036–1040 is the LXXLL motif 2 element; that stretch reads LFSLL. The region spanning 1186–1337 is the Helicase C-terminal domain; the sequence is LIDKLLPKMK…KAVLQSMSGR (152 aa). A disordered region spans residues 1461–1484; it reads KDELAELSEAESEGDEKPKLRRPC. Over residues 1465–1474 the composition is skewed to acidic residues; that stretch reads AELSEAESEG. A phosphoserine mark is found at S1468 and S1472. The segment covering 1475-1484 has biased composition (basic and acidic residues); it reads DEKPKLRRPC. Residues K1588, K1738, and K1903 each participate in a glycyl lysine isopeptide (Lys-Gly) (interchain with G-Cter in SUMO2) cross-link. The residue at position 2026 (S2026) is a Phosphoserine. The short motif at 2031–2035 is the LXXLL motif 3 element; that stretch reads LPRLL. K2038 is covalently cross-linked (Glycyl lysine isopeptide (Lys-Gly) (interchain with G-Cter in SUMO2)). 2 disordered regions span residues 2050-2238 and 2305-2337; these read ENLK…QMNN and GAAT…SKVK. S2058 and S2059 each carry phosphoserine. K2074 is covalently cross-linked (Glycyl lysine isopeptide (Lys-Gly) (interchain with G-Cter in SUMO2)). Phosphoserine is present on residues S2075 and S2079. Positions 2094-2104 are enriched in basic and acidic residues; that stretch reads SGGKCETDRRM. Over residues 2141–2193 the composition is skewed to low complexity; that stretch reads SSCSSRSSSSSSSSSCSHSRSGSSSSSSSSCSSASSSSSSSTSSSSSSSSSSS. The segment covering 2203–2216 has biased composition (basic and acidic residues); it reads AQKRESTTHMKAYD. The segment covering 2221-2238 has biased composition (polar residues); that stretch reads ASLSTTQDETQDSFQMNN. The segment at 2332–2481 is binds A/T-rich DNA; sequence QMSKVKKHVR…LSYTQPQGIP (150 aa). Glycyl lysine isopeptide (Lys-Gly) (interchain with G-Cter in SUMO2) cross-links involve residues K2350, K2356, and K2361. Residues 2429 to 2436 are a.T hook-like; the sequence is KKRRGRRK. The LXXLL motif 4 motif lies at 2721–2725; the sequence is LPNLL. The segment at 2729–2777 is disordered; it reads GLLTKPTESGTEDKKGSDSKESEGKTERTESQSSENGGENSVSSSPSTS. Over residues 2739-2758 the composition is skewed to basic and acidic residues; the sequence is TEDKKGSDSKESEGKTERTE. Positions 2759 to 2777 are enriched in low complexity; it reads SQSSENGGENSVSSSPSTS. The LXXLL motif 5 motif lies at 2793-2797; that stretch reads LNPLL. A disordered region spans residues 2827-2897; sequence VQNKNSDLGS…SEDSDSSNED (71 aa). The span at 2840–2857 shows a compositional bias: basic and acidic residues; sequence VEVKEEDSRIKDQEDKGG. A Glycyl lysine isopeptide (Lys-Gly) (interchain with G-Cter in SUMO2) cross-link involves residue K2843. Residues 2877-2888 show a composition bias toward low complexity; the sequence is ASSGSDSTSSSS.

This sequence belongs to the SNF2/RAD54 helicase family. In terms of assembly, interacts with PPARA. Probably interacts with ESR1 and NR1I3. In terms of processing, phosphorylated on serine and tyrosine residues. Widely expressed at low levels. In bone marrow, expression is restricted to osteoprogenitor cells adjacent to mature osteoblasts.

It localises to the cytoplasm. It is found in the nucleus. The enzyme catalyses ATP + H2O = ADP + phosphate + H(+). Its function is as follows. Probable ATP-dependent chromatin-remodeling factor. Acts as a transcriptional coactivator for PPARA and possibly other nuclear receptors. Has DNA-dependent ATPase activity and binds to A/T-rich DNA. Associates with A/T-rich regulatory regions in promoters of genes that participate in the differentiation of progenitors during osteogenesis. This Homo sapiens (Human) protein is Chromodomain-helicase-DNA-binding protein 9 (CHD9).